Here is a 256-residue protein sequence, read N- to C-terminus: MLLVIDIGNTHTVLGLFSGDTLVDHWRVATDARRTADELGFLIRGLLGQARRADGITGVSCCSTVPAALREVRTMSARWFPDAPLVVVEPGIRTGVPVLYDNPREVGADRIVNTLAAFTLHGGPAIVVDFGTSTNFDVVSARGEFLGGVLAPGIDISIDALASRAAQLVKVQVAKPRSVIGKNTVEALQAGIVYGFAAQVDGIVTRIAEQLPSRPVVIATGGLAPVVLDECRTVDVHDPWLTLTGLRLIFERNVPE.

ATP is bound at residue 6-13; that stretch reads DIGNTHTV. Residues Y100 and 107-110 contribute to the substrate site; that span reads GADR. The active-site Proton acceptor is the D109. D129 lines the K(+) pocket. ATP is bound at residue T132. T184 serves as a coordination point for substrate.

This sequence belongs to the type III pantothenate kinase family. Homodimer. Requires NH4(+) as cofactor. It depends on K(+) as a cofactor.

The protein resides in the cytoplasm. The enzyme catalyses (R)-pantothenate + ATP = (R)-4'-phosphopantothenate + ADP + H(+). It functions in the pathway cofactor biosynthesis; coenzyme A biosynthesis; CoA from (R)-pantothenate: step 1/5. In terms of biological role, catalyzes the phosphorylation of pantothenate (Pan), the first step in CoA biosynthesis. The sequence is that of Type III pantothenate kinase from Acidothermus cellulolyticus (strain ATCC 43068 / DSM 8971 / 11B).